The chain runs to 728 residues: Procollagen-lysine,2-oxoglutarate 5-dioxygenase 1 (728 aa).

Positions Met1 to Ala18 are cleaved as a signal peptide. Residues Asn198 and Asn539 are each glycosylated (N-linked (GlcNAc...) asparagine). One can recognise a Fe2OG dioxygenase domain in the interval Gln637 to Pro728. The Fe cation site is built by His657 and Asp659. An N-linked (GlcNAc...) asparagine glycan is attached at Asn687. His709 is a binding site for Fe cation. Arg719 is a catalytic residue.

Homodimer. Identified in a complex with P3H3 and P3H4. Requires Fe(2+) as cofactor. L-ascorbate is required as a cofactor. Highly expressed in the liver, heart, lung, skeletal muscle and kidney.

The protein resides in the rough endoplasmic reticulum membrane. It catalyses the reaction L-lysyl-[collagen] + 2-oxoglutarate + O2 = (5R)-5-hydroxy-L-lysyl-[collagen] + succinate + CO2. In terms of biological role, part of a complex composed of PLOD1, P3H3 and P3H4 that catalyzes hydroxylation of lysine residues in collagen alpha chains and is required for normal assembly and cross-linkling of collagen fibrils. Forms hydroxylysine residues in -Xaa-Lys-Gly- sequences in collagens. These hydroxylysines serve as sites of attachment for carbohydrate units and are essential for the stability of the intermolecular collagen cross-links. The sequence is that of Procollagen-lysine,2-oxoglutarate 5-dioxygenase 1 (Plod1) from Mus musculus (Mouse).